Reading from the N-terminus, the 123-residue chain is WAP four-disulfide core domain protein 5 (123 aa).

An N-terminal signal peptide occupies residues 1-24 (MRTQSLLLLGALLAVGSQLPAVFG). WAP domains are found at residues 27–73 (KGEK…CVPR) and 74–121 (VSVK…RDPA). 8 disulfide bridges follow: Cys-34–Cys-62, Cys-41–Cys-66, Cys-49–Cys-61, Cys-55–Cys-70, Cys-81–Cys-109, Cys-88–Cys-113, Cys-96–Cys-108, and Cys-102–Cys-117.

It is found in the secreted. Functionally, putative acid-stable proteinase inhibitor. This chain is WAP four-disulfide core domain protein 5 (WFDC5), found in Pan troglodytes (Chimpanzee).